A 694-amino-acid polypeptide reads, in one-letter code: N,N-dimethylglycine/sarcosine dehydrogenase (694 aa).

This sequence in the N-terminal section; belongs to the NADH:flavin oxidoreductase/NADH oxidase family. As to quaternary structure, monomer. The purified enzyme exists in the form of a monomer, dimer or polymer under non-denaturing conditions, but only the monomeric protein exhibits enzyme activity. FAD serves as cofactor. The cofactor is NAD(+). It depends on NADP(+) as a cofactor.

The protein resides in the cytoplasm. The enzyme catalyses oxidized 2[4Fe-4S]-[ferredoxin] + N,N-dimethylglycine + H2O = reduced 2[4Fe-4S]-[ferredoxin] + sarcosine + formaldehyde + 2 H(+). It carries out the reaction oxidized 2[4Fe-4S]-[ferredoxin] + sarcosine + H2O = reduced 2[4Fe-4S]-[ferredoxin] + formaldehyde + glycine + 2 H(+). With respect to regulation, ca(2+) increases the activity by 12%, while the other metal ions tested have no or slightly inhibitory effects. The chelating agent EDTA inhibits the activity by 33%. Functionally, involved in degradation of glycine betaine. Catalyzes the demethylation of both N,N-dimethylglycine (DMG) and sarcosine, releasing formaldehyde and forming glycine as the final product. Does not show activity toward trimethylamine (TMA), histamine, glycine betaine (GB) or choline. The C-N bond in DMG is probably oxidized by removal of a hydride equivalent to form a labile imine intermediate, which is then spontaneously hydrolyzed in the presence of water, producing sarcosine and formaldehyde. The two protons subtracted from DMG are transferred to the non-covalently bound FAD, resulting in the reduced form of FAD, which is subsequently reoxidized by coupling with reduction of the enzyme-bound NAD(P)(+). Regeneration of NAD(P)(+) is achieved by electron transfer to the [4Fe-4S] cluster in the probable membrane-anchored ferredoxin csal_0991. The polypeptide is N,N-dimethylglycine/sarcosine dehydrogenase (Chromohalobacter salexigens (strain ATCC BAA-138 / DSM 3043 / CIP 106854 / NCIMB 13768 / 1H11)).